We begin with the raw amino-acid sequence, 909 residues long: ABC transporter A family member 10 (909 aa).

7 helical membrane passes run 35–55 (VLVPLLLCLFLLGIQLLLDVV), 320–340 (IASMLGPLFFTWVVLLLFPVI), 374–394 (FLTLSMFYVISLVIFGSAIGL), 406–426 (FIFYFIFVNLQISFAFLASSI), 433–453 (ATVVAYTLVFASGLLGMFLFG), 465–485 (GILALELYPGFSLFRGLYEFA), and 507–527 (LFYLMSVEWFVILIVAYSIDL). Position 555 is a phosphoserine (Ser555). The ABC transporter domain maps to 587–824 (IVCDNLKKVY…YGGSYVFTMT (238 aa)). 625–632 (GPNGAGKT) contributes to the ATP binding site.

It belongs to the ABC transporter superfamily. ABCA family. CPR flippase (TC 3.A.1.211) subfamily.

It localises to the membrane. In Arabidopsis thaliana (Mouse-ear cress), this protein is ABC transporter A family member 10 (ABCA10).